A 726-amino-acid chain; its full sequence is Germacradienol/geosmin synthase (726 aa).

The tract at residues 2–354 (TQQPFQLPHF…TSAADVGALL (353 aa)) is germacradienol/germacrene D synthase. Mg(2+)-binding residues include aspartate 86, glutamate 91, asparagine 267, threonine 271, glutamine 276, aspartate 455, asparagine 598, serine 602, and glutamate 606. Residues 86-91 (DDHFLE) carry the DDXXD motif 1; degenerate motif. The segment at 355 to 726 (ADAVAQRARS…VPRSSPALTH (372 aa)) is geosmin synthase. The short motif at 455-459 (DDYYP) is the DDXXD motif 2; degenerate element.

Belongs to the terpene synthase family. Mg(2+) serves as cofactor.

The catalysed reaction is (2E,6E)-farnesyl diphosphate + H2O = (1E,4S,5E,7R)-germacra-1(10),5-dien-11-ol + diphosphate. It carries out the reaction (1E,4S,5E,7R)-germacra-1(10),5-dien-11-ol + H2O = (-)-geosmin + acetone. It catalyses the reaction (2E,6E)-farnesyl diphosphate = (-)-germacrene D + diphosphate. It functions in the pathway secondary metabolite biosynthesis; geosmin biosynthesis. It participates in sesquiterpene biosynthesis; germacradienol biosynthesis; germacradienol from farnesyl diphosphate: step 1/1. The protein operates within sesquiterpene biosynthesis; germacrene D biosynthesis; germacrene D from farnesyl diphosphate: step 1/1. In terms of biological role, tow-domain protein where the N-terminal domain catalyzes the cyclization of farnesyl diphosphate (FPP) to a 85:15 mixture of the sesquiterpene alcohol germacradienol and the sesquiterpene hydrocarbon germacrene D. The C-terminal domain partially converts the germacradienol formed into geosmin, the characteristic odoriferous ('earthy aroma') constituent of Streptomyces species. The sequence is that of Germacradienol/geosmin synthase (cyc2) from Streptomyces coelicolor (strain ATCC BAA-471 / A3(2) / M145).